The sequence spans 217 residues: Large ribosomal subunit protein uL3 (217 aa).

Residues 137 to 160 (VSASHGSHRNHRKPGSIGASSTPS) are disordered.

It belongs to the universal ribosomal protein uL3 family. As to quaternary structure, part of the 50S ribosomal subunit. Forms a cluster with proteins L14 and L19.

One of the primary rRNA binding proteins, it binds directly near the 3'-end of the 23S rRNA, where it nucleates assembly of the 50S subunit. The sequence is that of Large ribosomal subunit protein uL3 from Clavibacter michiganensis subsp. michiganensis (strain NCPPB 382).